Consider the following 153-residue polypeptide: Transcription antitermination protein NusB (153 aa).

This sequence belongs to the NusB family.

In terms of biological role, involved in transcription antitermination. Required for transcription of ribosomal RNA (rRNA) genes. Binds specifically to the boxA antiterminator sequence of the ribosomal RNA (rrn) operons. This Symbiobacterium thermophilum (strain DSM 24528 / JCM 14929 / IAM 14863 / T) protein is Transcription antitermination protein NusB.